Consider the following 137-residue polypeptide: Peptide methionine sulfoxide reductase MsrB (137 aa).

Positions 7 to 129 constitute a MsrB domain; it reads PTENIEKLSD…NSASLNFVDD (123 aa). Residues C46, C49, C95, and C98 each contribute to the Zn(2+) site. C118 serves as the catalytic Nucleophile.

Belongs to the MsrB Met sulfoxide reductase family. Zn(2+) serves as cofactor.

The catalysed reaction is L-methionyl-[protein] + [thioredoxin]-disulfide + H2O = L-methionyl-(R)-S-oxide-[protein] + [thioredoxin]-dithiol. The protein is Peptide methionine sulfoxide reductase MsrB of Yersinia pseudotuberculosis serotype O:1b (strain IP 31758).